The sequence spans 501 residues: Actin-binding protein WASF3 (501 aa).

The stretch at 57–93 forms a coiled coil; that stretch reads NEANNFYIRANSLQDRIDRLAVKVTQLDSTVEEVSLQ. At Tyr-151 the chain carries Phosphotyrosine; by ABL1. A coiled-coil region spans residues 162–206; it reads KEKMLQDTEDKRKEKRRQKEQKRVDGTTREVKKVRKARNRRQEWN. Residues 170 to 443 form a disordered region; it reads EDKRKEKRRQ…PPISDARSDL (274 aa). Over residues 182–192 the composition is skewed to basic and acidic residues; that stretch reads QKRVDGTTREV. A compositionally biased stretch (polar residues) spans 219–237; it reads RLSQSVHHGASSEGSLSPD. Tyr-248 is subject to Phosphotyrosine; by ABL1. The span at 256–267 shows a compositional bias: polar residues; the sequence is HALQAQPATPSY. A compositionally biased stretch (pro residues) spans 302–312; it reads QQPPPPPPPQA. At Tyr-337 the chain carries Phosphotyrosine; by ABL1. Pro residues-rich tracts occupy residues 341–352 and 394–410; these read SGPPPPPPPPMI and APPPPGPPPPPPGPPGP. The segment covering 411–422 has biased composition (low complexity); it reads SSLSSSPMHGPP. A WH2 domain is found at 439 to 456; sequence ARSDLLAAIRMGIQLKKV. Residue Tyr-485 is modified to Phosphotyrosine; by ABL1.

Belongs to the SCAR/WAVE family. Binds actin and the Arp2/3 complex. Phosphorylation by ABL1 promotes lamellipodia formation and cell migration.

The protein localises to the cytoplasm. The protein resides in the cytoskeleton. In terms of biological role, downstream effector molecules involved in the transmission of signals from tyrosine kinase receptors and small GTPases to the actin cytoskeleton. Plays a role in the regulation of cell morphology and cytoskeletal organization. Required in the control of cell shape. This is Actin-binding protein WASF3 (Wasf3) from Mus musculus (Mouse).